The chain runs to 319 residues: High mobility group B protein 10 (319 aa).

The span at 1–13 (MSTDISPPYSQTH) shows a compositional bias: polar residues. Residues 1–25 (MSTDISPPYSQTHVEPVNGYPSDNK) are disordered. The region spanning 40–131 (VRNSALFWEK…FLFQLEHVYY (92 aa)) is the ARID domain. Positions 203-220 (PSQSQQTMETPSAIVQSS) are enriched in polar residues. Residues 203 to 230 (PSQSQQTMETPSAIVQSSQRRHRKKSKL) are disordered. Residues 238-305 (PKCHRSGYNF…RYRIEMLEYK (68 aa)) constitute a DNA-binding region (HMG box).

Ubiquitously expressed.

The protein localises to the nucleus. Binds preferentially DNA with A/T-rich content. The chain is High mobility group B protein 10 (HMGB10) from Arabidopsis thaliana (Mouse-ear cress).